Reading from the N-terminus, the 415-residue chain is 3-isopropylmalate dehydratase large subunit (415 aa).

[4Fe-4S] cluster is bound by residues C295, C353, and C356.

The protein belongs to the aconitase/IPM isomerase family. LeuC type 2 subfamily. In terms of assembly, heterodimer of LeuC and LeuD. It depends on [4Fe-4S] cluster as a cofactor.

The enzyme catalyses (2R,3S)-3-isopropylmalate = (2S)-2-isopropylmalate. The protein operates within amino-acid biosynthesis; L-leucine biosynthesis; L-leucine from 3-methyl-2-oxobutanoate: step 2/4. Catalyzes the isomerization between 2-isopropylmalate and 3-isopropylmalate, via the formation of 2-isopropylmaleate. The polypeptide is 3-isopropylmalate dehydratase large subunit (Pyrobaculum aerophilum (strain ATCC 51768 / DSM 7523 / JCM 9630 / CIP 104966 / NBRC 100827 / IM2)).